A 203-amino-acid chain; its full sequence is Ribonuclease HII (203 aa).

The RNase H type-2 domain occupies 14–203 (GVIAGVDEVG…ILNSTKRALL (190 aa)). 3 residues coordinate a divalent metal cation: Asp-20, Glu-21, and Asp-112.

Belongs to the RNase HII family. It depends on Mn(2+) as a cofactor. Requires Mg(2+) as cofactor.

The protein resides in the cytoplasm. The enzyme catalyses Endonucleolytic cleavage to 5'-phosphomonoester.. Its function is as follows. Endonuclease that specifically degrades the RNA of RNA-DNA hybrids. The sequence is that of Ribonuclease HII from Wolbachia sp. subsp. Brugia malayi (strain TRS).